Here is a 326-residue protein sequence, read N- to C-terminus: MIELFVIKETEWLELVTESVSLEGQRYQAPRSITAKIITKQGTHSYYSVSEGDTVLFKWKGKELFRGIVFSRNPEEHWMTFTAYDMLQYLVKNKDVYVFSNQRADEIIKRLARDFQIPTTSIANTGYTIKSLVFKDDTSLYDMILKALKQTKSQTGRNYQLYSAKGKLGLRAWPDLSEVWVLETGVNITGYQYSTSINDTATKVKLRRQKDNKTYTATASDSSGISKYGVLQYVETVSDNINQAQLQERAKVKQAQKKGVKKELKSIQAIGIPDLQSGLPIYISIPEVGVKKTYWIDTDKHEFKGSTHTMTIDVVEKNSIPDGVSS.

It to B.subtilis XkdQ.

This is an uncharacterized protein from Bacillus subtilis (strain 168).